The sequence spans 237 residues: Ribonuclease PH (237 aa).

Phosphate-binding positions include R86 and 124-126; that span reads GTR.

The protein belongs to the RNase PH family. As to quaternary structure, homohexameric ring arranged as a trimer of dimers.

The catalysed reaction is tRNA(n+1) + phosphate = tRNA(n) + a ribonucleoside 5'-diphosphate. Phosphorolytic 3'-5' exoribonuclease that plays an important role in tRNA 3'-end maturation. Removes nucleotide residues following the 3'-CCA terminus of tRNAs; can also add nucleotides to the ends of RNA molecules by using nucleoside diphosphates as substrates, but this may not be physiologically important. Probably plays a role in initiation of 16S rRNA degradation (leading to ribosome degradation) during starvation. The sequence is that of Ribonuclease PH from Myxococcus xanthus (strain DK1622).